Reading from the N-terminus, the 460-residue chain is Phosphomethylpyrimidine synthase (460 aa).

Residues N80, M109, Y139, H175, S195–G197, D236–R239, and E275 each bind substrate. Residue H279 participates in Zn(2+) binding. Y302 serves as a coordination point for substrate. A Zn(2+)-binding site is contributed by H343. [4Fe-4S] cluster contacts are provided by C423, C426, and C431.

The protein belongs to the ThiC family. Requires [4Fe-4S] cluster as cofactor.

The enzyme catalyses 5-amino-1-(5-phospho-beta-D-ribosyl)imidazole + S-adenosyl-L-methionine = 4-amino-2-methyl-5-(phosphooxymethyl)pyrimidine + CO + 5'-deoxyadenosine + formate + L-methionine + 3 H(+). It functions in the pathway cofactor biosynthesis; thiamine diphosphate biosynthesis. Its function is as follows. Catalyzes the synthesis of the hydroxymethylpyrimidine phosphate (HMP-P) moiety of thiamine from aminoimidazole ribotide (AIR) in a radical S-adenosyl-L-methionine (SAM)-dependent reaction. In Rippkaea orientalis (strain PCC 8801 / RF-1) (Cyanothece sp. (strain PCC 8801)), this protein is Phosphomethylpyrimidine synthase.